A 37-amino-acid chain; its full sequence is Desulforedoxin (37 aa).

Positions 10, 13, 29, and 30 each coordinate Fe cation.

It to the N-terminal section of desulfoferrodoxin. Homodimer. It depends on Fe cation as a cofactor.

Functionally, nonheme iron protein possibly involved in electron transport. The chain is Desulforedoxin (dsr) from Megalodesulfovibrio gigas (Desulfovibrio gigas).